The sequence spans 563 residues: Arginine--tRNA ligase (563 aa).

A 'HIGH' region motif is present at residues 121 to 131 (PNIAKPFSIGH).

The protein belongs to the class-I aminoacyl-tRNA synthetase family. Monomer.

Its subcellular location is the cytoplasm. The enzyme catalyses tRNA(Arg) + L-arginine + ATP = L-arginyl-tRNA(Arg) + AMP + diphosphate. The protein is Arginine--tRNA ligase of Streptococcus agalactiae serotype Ia (strain ATCC 27591 / A909 / CDC SS700).